The following is a 125-amino-acid chain: MNIVHFGSDDIENSLANMSDQDLNQLAFGAIQLDASGKVLQYNAAEEGITGRDPKSVIGKNFFEDVAPCTKSQEFQGRFKEGVANGNLATMFEYVFDYQMKPTKVKVHMKKALVDDSYWIFVKRL.

The PAS domain occupies 23 to 86 (LNQLAFGAIQ…GRFKEGVANG (64 aa)). At C69 the chain carries S-(4-hydroxycinnamyl)cysteine.

The protein belongs to the photoactive yellow protein family. Post-translationally, the 4-hydroxycinnamic acid (p-coumaric acid) chromophore is covalently bound via a thioester linkage.

In terms of biological role, photoactive blue light protein. Probably functions as a photoreceptor for a negative phototaxis response. The protein is Photoactive yellow protein (pyp) of Halochromatium salexigens (Chromatium salexigens).